The sequence spans 1175 residues: Beta-agarase AgaO (1175 aa).

An N-terminal signal peptide occupies residues 1 to 29 (MRLSKSQGILPLAHAVLAAAIAYSTAATA). One can recognise a CBM6 1 domain in the interval 32 to 164 (YRLEAEDFTN…QWNLDKMELA (133 aa)). The segment at 169 to 208 (SSSSSGGGSTSSSSSGGSSSSSGSGSSSSGGSPEEGGHVS) is disordered. Low complexity predominate over residues 178-200 (TSSSSSGGSSSSSGSGSSSSGGS). The 129-residue stretch at 211–339 (FKLEAESAHH…QFNIDYVIFE (129 aa)) folds into the CBM6 2 domain. A disordered region spans residues 355 to 481 (IADVNDSCPG…ESGCSPSQVA (127 aa)). Basic and acidic residues predominate over residues 382–393 (DTDKDGIADNRD). Over residues 471-481 (NESGCSPSQVA) the composition is skewed to polar residues. The active-site Proton donor is Glu661. Residue Glu832 is the Nucleophile of the active site.

This sequence belongs to the glycosyl hydrolase 86 family.

It carries out the reaction Hydrolysis of (1-&gt;4)-beta-D-galactosidic linkages in agarose, giving the tetramer as the predominant product.. Its activity is regulated as follows. Activity and stability are strongly enhanced by CaCl(2). Activity is not affected by sulfhydryl inhibitors such as iodoacetoamide and p-chloromercuribenzoate or by thiol reagents such as dithiothreitol and 2-mercaptoethanol. Strongly inhibited by N-bromosuccinimide and sodium dodecyl sulfate. Functionally, endo-type beta-agarase, which degrades agarose and agarose oligosaccharides more polymerized than hexamers to yield neoagarohexaose (NA6) as the main product, with lesser amounts of neoagarotetraose (NA4) and neoagarobiose (NA2). The sequence is that of Beta-agarase AgaO from Microbulbifer thermotolerans.